The chain runs to 676 residues: MAPTSMSLAAKTPLPFSTLPSSGVAQRPVSVTASLEHKTNDARRKFLKLALGNLGVGLPTLLGAKRALAEEQGVSSSRMSYSRFLEYLDKDRVKKVDLFENGTIAIVEAISPELGNRVQRVRVQLPGLSQELLQKLREKNIDFAAHSNQEDSGSLLFNLIGNLAFPLILIGGLFLLSRRAQGGLGGPNGPGFPLGFGQSRAKFQMEPNTGVTFDDVAGVDEAKQDFMEVVEFLKKPERFTAVGARIPKGVLLVGPPGTGKTLLAKAIAGEAGVPFFSISGSEFVEMFVGVGASRVRDLFKKAKENAPCIVFVDEIDAVGRQRGTGIGGGNDEREQTLNQLLTEMDGFEGNTGIIVIAATNRADILDSALLRPGRFDRQVSVDVPDVRGRTEILKVHGSNKKFDTDVSLEVIAMRTPGFSGADLANLLNEAAILAGRRGRTAISSKEIDDSIDRIVAGMEGTVMTDGKSKSLVAYHEVGHAICGTLTPGHDPVQKVTLIPRGQARGLTWFIPMDDPTLISRQQLFARIVGGLGGRAAEEIIFGEPEVTTGAAGDLQQITGLAKQMVVTFGMSDIGPWSLMDSGAQSGDVIMRMMARNSMSEKLAEDIDTAVKRLSDEAYEIALSQIRSNREAMDKIVEVLLEKETLSGDEFRAILSEFTEIPVENRVPPATPAALPA.

The transit peptide at 1–32 (MAPTSMSLAAKTPLPFSTLPSSGVAQRPVSVT) directs the protein to the chloroplast. The helical transmembrane segment at 155–175 (LLFNLIGNLAFPLILIGGLFL) threads the bilayer. Position 254–261 (254–261 (GPPGTGKT)) interacts with ATP. Histidine 475 lines the Zn(2+) pocket. Glutamate 476 is an active-site residue. The Zn(2+) site is built by histidine 479 and aspartate 553.

It in the N-terminal section; belongs to the AAA ATPase family. The protein in the C-terminal section; belongs to the peptidase M41 family. It depends on Zn(2+) as a cofactor.

The protein resides in the plastid. It localises to the chloroplast thylakoid membrane. Probable ATP-dependent zinc metallopeptidase. The polypeptide is ATP-dependent zinc metalloprotease FTSH 2, chloroplastic (FTSH2) (Oryza sativa subsp. japonica (Rice)).